The following is a 1214-amino-acid chain: Reverse gyrase (1214 aa).

Residues 1–37 (MKAIYRDMCPNCRGAITDERLAAKNPCDACLDEPISM) form an RG N-terminal-type zinc finger. Positions 9, 12, 27, and 30 each coordinate Zn(2+). ATP-binding positions include Gln-89 and 106 to 113 (APTGMGKS). The Helicase ATP-binding domain maps to 93 to 252 (VKRIIKGKSF…WEIIKLKKQL (160 aa)). Residues 213 to 216 (DDVD) carry the DEAD box motif. Positions 635–1214 (DLVKSALMIV…YEEILRYVKS (580 aa)) are topoisomerase I. The Toprim domain maps to 639-802 (SALMIVESPN…VIKRIEFHEV (164 aa)). Glu-645 lines the Mg(2+) pocket. An RG C-terminal-type zinc finger spans residues 719 to 748 (IKRCRDCGHQFVDWEEKGVCPRCGSRNVYD). Zn(2+) is bound by residues Cys-722, Cys-725, Cys-738, and Cys-741. Asp-771 is a binding site for Mg(2+). The 395-residue stretch at 818 to 1212 (NEDRVNAQLV…ELYEEILRYV (395 aa)) folds into the Topo IA-type catalytic domain. Residue Tyr-955 is the O-(5'-phospho-DNA)-tyrosine intermediate of the active site.

It in the N-terminal section; belongs to the DEAD box helicase family. DDVD subfamily. In the C-terminal section; belongs to the type IA topoisomerase family. As to quaternary structure, monomer. The cofactor is Zn(2+). It depends on Mg(2+) as a cofactor.

Its subcellular location is the cytoplasm. The enzyme catalyses ATP + H2O = ADP + phosphate + H(+). Functionally, modifies the topological state of DNA by introducing positive supercoils in an ATP-dependent process. Increases the linking number in steps of +1. Binds to single-stranded DNA, transiently cleaves and then rejoins the ends, introducing a positive supercoil in the process. The scissile phosphodiester is attacked by the catalytic tyrosine of the enzyme, resulting in the formation of a DNA-(5'-phosphotyrosyl)-enzyme intermediate. Probably involved in rewinding DNA strands in regions of the chromosome that have opened up to allow replication, transcription, DNA repair and/or for DNA protection. This chain is Reverse gyrase, found in Pyrococcus furiosus (strain ATCC 43587 / DSM 3638 / JCM 8422 / Vc1).